Here is a 574-residue protein sequence, read N- to C-terminus: Membralin (574 aa).

Residues 1-27 are disordered; sequence MSEHAAAPGPGPNGGGGGGAAPVRGPR. Ser-2 is modified (N-acetylserine). The chain crosses the membrane as a helical span at residues 69-89; the sequence is FFVLLKALFVLFVLAYIHIVF. An N-linked (GlcNAc...) asparagine glycan is attached at Asn-180. The next 3 membrane-spanning stretches (helical) occupy residues 293–313, 337–357, and 417–437; these read TSYL…SMLL, IAFP…MEAI, and YSSL…IYFF. Low complexity-rich tracts occupy residues 461 to 470 and 491 to 501; these read LGPGTPTALP and LGPSSSPAPTG. 2 disordered regions span residues 461–515 and 546–574; these read LGPG…GASV and RRPT…PAGS.

This sequence belongs to the membralin family. Interacts with ERLIN2. As to expression, detected in brain, spinal cord, lung, liver and kidney.

The protein localises to the endoplasmic reticulum membrane. In terms of biological role, may have a role in the ERAD pathway required for clearance of misfolded proteins in the endoplasmic reticulum (ER). Promotes survival of motor neurons, probably by protecting against ER stress. The chain is Membralin (Tmem259) from Mus musculus (Mouse).